The primary structure comprises 308 residues: Glycine-rich protein GRP33 (308 aa).

Residues 83-118 (DQFPKYNFLGKLLGPGGSTMKQLQDETMTKISILGR) form the KH domain. 2 stretches are compositionally biased toward gly residues: residues 203–220 (GPMGPQGRGRGRGRGGFS) and 273–294 (RGAGAGARGARGGLDQSRGGGK). 2 disordered regions span residues 203 to 222 (GPMGPQGRGRGRGRGGFSGP) and 270 to 308 (SPGRGAGAGARGARGGLDQSRGGGKFPSARGGRGRAAPY).

The arginines in the Gly-rich domain might be methylated.

The chain is Glycine-rich protein GRP33 from Artemia salina (Brine shrimp).